The following is a 293-amino-acid chain: Pantothenate synthetase (293 aa).

M30–H37 is a binding site for ATP. H37 functions as the Proton donor in the catalytic mechanism. Q61 serves as a coordination point for (R)-pantoate. Q61 lines the beta-alanine pocket. ATP is bound at residue G147–D150. Q153 lines the (R)-pantoate pocket. ATP-binding positions include V176 and C184–R187.

This sequence belongs to the pantothenate synthetase family. Homodimer.

The protein resides in the cytoplasm. The enzyme catalyses (R)-pantoate + beta-alanine + ATP = (R)-pantothenate + AMP + diphosphate + H(+). It participates in cofactor biosynthesis; (R)-pantothenate biosynthesis; (R)-pantothenate from (R)-pantoate and beta-alanine: step 1/1. Catalyzes the condensation of pantoate with beta-alanine in an ATP-dependent reaction via a pantoyl-adenylate intermediate. The sequence is that of Pantothenate synthetase from Brucella melitensis biotype 2 (strain ATCC 23457).